The chain runs to 338 residues: Arginine N-succinyltransferase subunit alpha (338 aa).

It belongs to the succinylarginine dihydrolase family. As to quaternary structure, heterotetramer of two alpha and two beta subunits.

The enzyme catalyses succinyl-CoA + L-arginine = N(2)-succinyl-L-arginine + CoA + H(+). Its pathway is amino-acid degradation; L-arginine degradation via AST pathway; L-glutamate and succinate from L-arginine: step 1/5. In terms of biological role, catalyzes the transfer of succinyl-CoA to arginine to produce N(2)-succinylarginine. Also acts on L-ornithine. This chain is Arginine N-succinyltransferase subunit alpha (astA), found in Pseudomonas aeruginosa (strain ATCC 15692 / DSM 22644 / CIP 104116 / JCM 14847 / LMG 12228 / 1C / PRS 101 / PAO1).